Reading from the N-terminus, the 614-residue chain is Chaperone protein HtpG (614 aa).

Positions 1 to 324 (MSQIETKEFQ…SEELPLNISR (324 aa)) are a; substrate-binding. The segment at 325 to 537 (ETMQDSALIA…SHYGTHSMQR (213 aa)) is b. The segment at 538–614 (MMQLMNRDLQ…LNEILEKALR (77 aa)) is c.

It belongs to the heat shock protein 90 family. As to quaternary structure, homodimer.

The protein localises to the cytoplasm. Its function is as follows. Molecular chaperone. Has ATPase activity. This is Chaperone protein HtpG from Desulfitobacterium hafniense (strain Y51).